A 33-amino-acid polypeptide reads, in one-letter code: Protamine-M6/M7 (33 aa).

Residues 1–33 (PRRRRETSRPIRRRRRARRAPIRRRRRVVRRRR) form a disordered region.

As to expression, testis.

The protein resides in the nucleus. The protein localises to the chromosome. Functionally, protamines substitute for histones in the chromatin of sperm during the haploid phase of spermatogenesis. They compact sperm DNA into a highly condensed, stable and inactive complex. In Mugil cephalus (Flathead mullet), this protein is Protamine-M6/M7.